Reading from the N-terminus, the 345-residue chain is D-fructose 1,6-bisphosphatase class 2/sedoheptulose 1,7-bisphosphatase (345 aa).

Mn(2+) is bound by residues Asp-33, Glu-57, Asp-97, and Glu-100. Residues 100-102 (EGT), Tyr-131, 176-178 (RPR), and 198-200 (DGD) each bind substrate. Glu-225 is a Mn(2+) binding site.

It belongs to the FBPase class 2 family. Homotetramer. It depends on Mn(2+) as a cofactor.

It catalyses the reaction beta-D-fructose 1,6-bisphosphate + H2O = beta-D-fructose 6-phosphate + phosphate. It carries out the reaction D-sedoheptulose 1,7-bisphosphate + H2O = D-sedoheptulose 7-phosphate + phosphate. It functions in the pathway carbohydrate biosynthesis; Calvin cycle. Inhibited by AMP and slightly innibited by hydrogen peroxyde. Its function is as follows. Catalyzes the hydrolysis of fructose 1,6-bisphosphate (Fru 1,6-P2) and sedoheptulose 1,7-bisphosphate (Sed 1,7-P2) to fructose 6-phosphate and sedoheptulose 7-phosphate, respectively. The polypeptide is D-fructose 1,6-bisphosphatase class 2/sedoheptulose 1,7-bisphosphatase (Synechococcus elongatus (strain ATCC 33912 / PCC 7942 / FACHB-805) (Anacystis nidulans R2)).